The following is a 187-amino-acid chain: Dihydrofolate reductase (187 aa).

The region spanning 4 to 185 is the DHFR domain; sequence PLNCIVAVSQ…IKYKFEVYEK (182 aa). NADP(+) contacts are provided by residues Ala-10 and 16–22; that span reads GIGKNGD. 31 to 36 serves as a coordination point for substrate; it reads EFKYFQ. At Lys-33 the chain carries N6-acetyllysine; alternate. An N6-succinyllysine; alternate modification is found at Lys-33. Residue 55–57 coordinates NADP(+); the sequence is RKT. The substrate site is built by Asn-65 and Arg-71. NADP(+)-binding positions include 77 to 79 and 117 to 124; these read SRE and GGSSVYQE.

It belongs to the dihydrofolate reductase family. Homodimer.

It is found in the mitochondrion. The protein localises to the cytoplasm. The enzyme catalyses (6S)-5,6,7,8-tetrahydrofolate + NADP(+) = 7,8-dihydrofolate + NADPH + H(+). It participates in cofactor biosynthesis; tetrahydrofolate biosynthesis; 5,6,7,8-tetrahydrofolate from 7,8-dihydrofolate: step 1/1. Key enzyme in folate metabolism. Contributes to the de novo mitochondrial thymidylate biosynthesis pathway. Catalyzes an essential reaction for de novo glycine and purine synthesis, and for DNA precursor synthesis. Binds its own mRNA. The sequence is that of Dihydrofolate reductase (Dhfr) from Mus musculus (Mouse).